A 305-amino-acid polypeptide reads, in one-letter code: Oxygen-dependent coproporphyrinogen-III oxidase (305 aa).

Residue Ser-93 participates in substrate binding. The a divalent metal cation site is built by His-97 and His-107. His-107 acts as the Proton donor in catalysis. 109-111 (NVR) contributes to the substrate binding site. Residues His-146 and His-176 each coordinate a divalent metal cation. The interval 241 to 276 (YVEFNLVFDRGTLFGLQSGGRTESILMSLPPQVRWG) is important for dimerization. Substrate is bound at residue 259–261 (GGR).

This sequence belongs to the aerobic coproporphyrinogen-III oxidase family. Homodimer. Requires a divalent metal cation as cofactor.

It is found in the cytoplasm. The catalysed reaction is coproporphyrinogen III + O2 + 2 H(+) = protoporphyrinogen IX + 2 CO2 + 2 H2O. It participates in porphyrin-containing compound metabolism; protoporphyrin-IX biosynthesis; protoporphyrinogen-IX from coproporphyrinogen-III (O2 route): step 1/1. Involved in the heme biosynthesis. Catalyzes the aerobic oxidative decarboxylation of propionate groups of rings A and B of coproporphyrinogen-III to yield the vinyl groups in protoporphyrinogen-IX. The sequence is that of Oxygen-dependent coproporphyrinogen-III oxidase from Pseudomonas aeruginosa (strain UCBPP-PA14).